Reading from the N-terminus, the 292-residue chain is Potassium channel, subfamily K, member 16 (292 aa).

Topologically, residues 1–13 (MPRAGVCGCWGGQ) are cytoplasmic. A helical transmembrane segment spans residues 14-34 (VLPLLLAYICYLLLGATIFQL). Positions 98–116 (SFFFAGTVVTTIGYGNLAP) form an intramembrane region, pore-forming. K(+)-binding residues include Thr108, Ile109, Gly110, and Tyr111. Residues 108-113 (TIGYGN) form a selectivity filter 1 region. A helical transmembrane segment spans residues 120 to 140 (AGQVFCVFYALMGIPLNVVFL). The Cytoplasmic segment spans residues 141-165 (NHLGTGLRAHLTTLDRWEDHPRHSQ). Residues 166 to 186 (LLQVLGLALFLTLGTLVILIF) traverse the membrane as a helical segment. The pore-forming intramembrane region spans 202–221 (GFYFAFITLSTIGFGDYVVG). K(+) contacts are provided by Thr212, Ile213, Gly214, and Phe215. The interval 212–217 (TIGFGD) is selectivity filter 2. Residues 238–258 (IWILLGLAWLAVVLSLGSLLL) form a helical membrane-spanning segment. The Cytoplasmic segment spans residues 259–292 (HRCSRLWQLIRGLDLKDGAAPDSEPRSQKIPISA).

The protein belongs to the two pore domain potassium channel (TC 1.A.1.8) family. As to quaternary structure, homodimer; disulfide-linked. Heterodimer with KCNK17 and KCNK5. In terms of tissue distribution, expressed in pacreatic beta-cells (at protein level). Expressed in pacreatic delta-cells (at protein level).

The protein localises to the cell membrane. It is found in the endoplasmic reticulum membrane. The protein resides in the mitochondrion inner membrane. It catalyses the reaction K(+)(in) = K(+)(out). The enzyme catalyses Rb(+)(in) = Rb(+)(out). The catalysed reaction is Cs(+)(in) = Cs(+)(out). Its function is as follows. K(+) channel that conducts voltage-dependent outward rectifying currents upon membrane depolarization. Voltage sensing is coupled to K(+) electrochemical gradient in an 'ion flux gating' mode where outward but not inward ion flow opens the gate. Homo- and heterodimerizes to form functional channels with distinct regulatory and gating properties. In pancreatic islets, conducts K(+) countercurrents for Ca(2+) release from the endoplasmic reticulum (ER) and regulates the frequency and duration of cytosolic Ca(2+) oscillations coupled to secretion of pancreatic hormones. In pancreatic beta cells, drives ER Ca(2+) efflux, which in turn activates Ca(2+)-dependent plasma membrane K(+) slow currents and cytosolic Ca(2+) influx, overall contributing to synchronous cytosolic Ca(2+) oscillations. Limits glucose-induced cytosolic Ca(2+) oscillations coupled to second-phase INS secretion. Contributes to beta cell adaptation to acute inflammation by maintaining normal cytosolic Ca(2+) levels and INS secretion. May regulate beta cell mitochondrial Ca(2+) levels either indirectly via ER Ca(2+) efflux or directly by hyperpolarizing the mitochondrial membrane potential. Limits mitochondrial Ca(2+) oscillations and ATP production involved in glucose homeostasis upon metabolic stress. In pancreatic delta cells, limits Ca(2+)-induced Ca(2+)-release involved in somatostatin secretion and modulates islet paracrine signaling involved in glucagon secretion. Permeable to other monovalent cations such as Rb(+) and Cs(+). This is Potassium channel, subfamily K, member 16 from Mus musculus (Mouse).